The following is a 375-amino-acid chain: Secondary metabolism regulator laeA (375 aa).

The span at 15–26 (ASPNRNNYSYQG) shows a compositional bias: polar residues. Disordered regions lie at residues 15–37 (ASPN…RSRQ) and 50–75 (QEPP…TSHY).

This sequence belongs to the methyltransferase superfamily. LaeA methyltransferase family. Component of the heterotrimeric velvet complex composed of laeA, veA and velB; VeA acting as a bridging protein between laeA and velB.

It localises to the nucleus. The catalysed reaction is L-methionyl-[protein] + S-adenosyl-L-methionine = S-methyl-L-methionyl-[protein] + S-adenosyl-L-homocysteine. Its function is as follows. Methyltransferase that performs automethylation. No other methyl-accepting substrate has been identified yet. Component of the velvet transcription factor complex that acts as a global regulator for secondary metabolite gene expression. Controls the expression of the citric acid, demethylkotanin, orlandin, asperrubrol, tensidol B, atromentin and JBIR8 gene clusters. Also represses the expression of genes related to the production of BMS-192548 and aspernigrin A. The sequence is that of Secondary metabolism regulator laeA from Aspergillus niger (strain ATCC 1015 / CBS 113.46 / FGSC A1144 / LSHB Ac4 / NCTC 3858a / NRRL 328 / USDA 3528.7).